Here is a 549-residue protein sequence, read N- to C-terminus: Polycomb group RING finger protein 3 homolog mig-32 (549 aa).

The interval 1–263 is disordered; the sequence is MTRKRPALAE…EESMRQKYGQ (263 aa). The segment covering 12 to 29 has biased composition (low complexity); that stretch reads VSSSRSRVTRRSTTGAPS. Composition is skewed to acidic residues over residues 38 to 49 and 87 to 100; these read PESDADSEDDYD and MDDD…DGEV. A compositionally biased stretch (basic residues) spans 118 to 130; sequence KTAKLQTKKKKKK. Residues 134–144 are compositionally biased toward pro residues; sequence PETPPTSPSPS. A compositionally biased stretch (low complexity) spans 145–156; sequence PSRSVSPSTTKS. Basic and acidic residues predominate over residues 205–235; it reads EEIKLRERAERKARRIEEAKNRPKLTIEQKL. A coiled-coil region spans residues 206–260; it reads EIKLRERAERKARRIEEAKNRPKLTIEQKLAKLRKKKERRERRKEQEKEESMRQK. The span at 236–247 shows a compositional bias: basic residues; the sequence is AKLRKKKERRER. Residues 248 to 258 are compositionally biased toward basic and acidic residues; that stretch reads RKEQEKEESMR. The RING-type zinc finger occupies 329–368; it reads CGICDGYIVDATTIIDCMHTFCKSCLLTYFESDNNTCPTC.

Component of a PRC1-like complex.

The protein localises to the nucleus. The protein resides in the nucleolus. Component of a Polycomb group (PcG) multiprotein PRC1-like complex, a complex class required to maintain the transcriptionally repressive state of many genes, throughout development. Required for ubiquitination of histone H2A. Plays a role in the formation of the male-specific genital sensilla (simple sense organs) known as rays. Required for normal migration of the hermaphrodite specific neurons (HSN) and for extension of some neuronal processes. Represses vulval fates in hypodermal cells that do not normally contribute to vulval development. This is Polycomb group RING finger protein 3 homolog mig-32 from Caenorhabditis elegans.